Consider the following 300-residue polypeptide: 4-hydroxy-tetrahydrodipicolinate synthase (300 aa).

Thr-57 is a binding site for pyruvate. The active-site Proton donor/acceptor is Tyr-145. Residue Lys-173 is the Schiff-base intermediate with substrate of the active site. Ile-213 is a binding site for pyruvate.

This sequence belongs to the DapA family. In terms of assembly, homotetramer; dimer of dimers.

Its subcellular location is the cytoplasm. The enzyme catalyses L-aspartate 4-semialdehyde + pyruvate = (2S,4S)-4-hydroxy-2,3,4,5-tetrahydrodipicolinate + H2O + H(+). It functions in the pathway amino-acid biosynthesis; L-lysine biosynthesis via DAP pathway; (S)-tetrahydrodipicolinate from L-aspartate: step 3/4. Its function is as follows. Catalyzes the condensation of (S)-aspartate-beta-semialdehyde [(S)-ASA] and pyruvate to 4-hydroxy-tetrahydrodipicolinate (HTPA). This Corynebacterium urealyticum (strain ATCC 43042 / DSM 7109) protein is 4-hydroxy-tetrahydrodipicolinate synthase.